Here is a 720-residue protein sequence, read N- to C-terminus: 1,4-alpha-glucan branching enzyme GlgB 2 (720 aa).

Asp-398 serves as the catalytic Nucleophile. Glu-451 serves as the catalytic Proton donor.

The protein belongs to the glycosyl hydrolase 13 family. GlgB subfamily. Monomer.

It carries out the reaction Transfers a segment of a (1-&gt;4)-alpha-D-glucan chain to a primary hydroxy group in a similar glucan chain.. It functions in the pathway glycan biosynthesis; glycogen biosynthesis. Its function is as follows. Catalyzes the formation of the alpha-1,6-glucosidic linkages in glycogen by scission of a 1,4-alpha-linked oligosaccharide from growing alpha-1,4-glucan chains and the subsequent attachment of the oligosaccharide to the alpha-1,6 position. The polypeptide is 1,4-alpha-glucan branching enzyme GlgB 2 (Xanthomonas oryzae pv. oryzae (strain KACC10331 / KXO85)).